The following is a 616-amino-acid chain: Endonuclease 8-like 3 (616 aa).

The FPG-type zinc finger occupies 271–305 (KVYKRPNCGQCGTKITVCRLGEHNRMTYFCPKCQK). Residues 341–370 (KEEHWACAVCTLINKPSDKQCDACLTLRPE) form a RanBP2-type zinc finger. The segment at 491–524 (LKTGHTTSNTIHLSSTISSPQSKMTGDAAAKTGN) is disordered. Positions 494–514 (GHTTSNTIHLSSTISSPQSKM) are enriched in polar residues. Zn(2+)-binding residues include Cys-527, His-530, Cys-553, Cys-561, Cys-574, His-576, Cys-599, and Cys-607. GRF-type zinc fingers lie at residues 527–570 (CSAH…ADLH) and 574–616 (CNHG…AKTE).

It belongs to the FPG family.

Its subcellular location is the nucleus. It localises to the chromosome. The enzyme catalyses 2'-deoxyribonucleotide-(2'-deoxyribose 5'-phosphate)-2'-deoxyribonucleotide-DNA = a 3'-end 2'-deoxyribonucleotide-(2,3-dehydro-2,3-deoxyribose 5'-phosphate)-DNA + a 5'-end 5'-phospho-2'-deoxyribonucleoside-DNA + H(+). Its function is as follows. DNA glycosylase which prefers single-stranded DNA (ssDNA), or partially ssDNA structures such as bubble and fork structures, to double-stranded DNA (dsDNA). Mediates interstrand cross-link repair in response to replication stress: recruited to replication stress sites via interaction with ubiquitinated CMG helicase and acts by mediating DNA glycosylase activity. Cleaves one of the two N-glycosyl bonds comprising the interstrand cross-link, which avoids the formation of a double-strand break but generates an abasic site that is bypassed by translesion synthesis polymerases. This chain is Endonuclease 8-like 3, found in Xenopus laevis (African clawed frog).